The sequence spans 237 residues: Probable transcriptional regulatory protein NIS_0560 (237 aa).

Belongs to the TACO1 family.

The protein resides in the cytoplasm. The sequence is that of Probable transcriptional regulatory protein NIS_0560 from Nitratiruptor sp. (strain SB155-2).